Here is a 267-residue protein sequence, read N- to C-terminus: MIKEYLKKPSLSDVQLTRDTRNIPIGKVGVKDISYPIVVMDKNKSFQNTIARINMYVDLPHHFKGTHMSRFVEILNEYREEIALDKLELILSTMKEKLGASNAHLEMEFPYFVEKTAPVSRAKSLMEYTCTFSASLSDRFDFVLGIKVPVTSLCPCSKELSSYGAHNQRSIMTVQVRYSEFIWIEDLIEIIEQCGSSPVYSLLKREDEKFVTERAYENPRFVEDMVREATVRLLSMQNVTWFSVEAENFESIHKHSAYAAIERSRES.

It belongs to the GTP cyclohydrolase IV family.

The enzyme catalyses GTP + H2O = 7,8-dihydroneopterin 3'-triphosphate + formate + H(+). It participates in cofactor biosynthesis; 7,8-dihydroneopterin triphosphate biosynthesis; 7,8-dihydroneopterin triphosphate from GTP: step 1/1. Its function is as follows. Converts GTP to 7,8-dihydroneopterin triphosphate. The protein is GTP cyclohydrolase FolE2 of Citrifermentans bemidjiense (strain ATCC BAA-1014 / DSM 16622 / JCM 12645 / Bem) (Geobacter bemidjiensis).